The primary structure comprises 85 residues: Small ribosomal subunit protein uS17 (85 aa).

It belongs to the universal ribosomal protein uS17 family. Part of the 30S ribosomal subunit.

One of the primary rRNA binding proteins, it binds specifically to the 5'-end of 16S ribosomal RNA. The sequence is that of Small ribosomal subunit protein uS17 from Desulfosudis oleivorans (strain DSM 6200 / JCM 39069 / Hxd3) (Desulfococcus oleovorans).